Reading from the N-terminus, the 486-residue chain is Hydrogenobyrinate a,c-diamide synthase (486 aa).

Residues 254–272 are compositionally biased toward pro residues; sequence SPPPPLPVPSPGAAPPDPL. The disordered stretch occupies residues 254–284; it reads SPPPPLPVPSPGAAPPDPLVRPGRPRPQAPD. Residues 289–474 enclose the GATase cobBQ-type domain; sequence RVAMASGAAF…LHTHWAAEPG (186 aa). C372 serves as the catalytic Nucleophile.

The protein belongs to the CobB/CbiA family. Mg(2+) serves as cofactor.

The enzyme catalyses hydrogenobyrinate + 2 L-glutamine + 2 ATP + 2 H2O = hydrogenobyrinate a,c-diamide + 2 L-glutamate + 2 ADP + 2 phosphate + 2 H(+). It functions in the pathway cofactor biosynthesis; adenosylcobalamin biosynthesis; cob(II)yrinate a,c-diamide from precorrin-2 (aerobic route): step 9/10. Functionally, catalyzes the ATP-dependent amidation of the two carboxylate groups at positions a and c of hydrogenobyrinate, using either L-glutamine or ammonia as the nitrogen source. This chain is Hydrogenobyrinate a,c-diamide synthase, found in Streptomyces coelicolor (strain ATCC BAA-471 / A3(2) / M145).